Here is a 64-residue protein sequence, read N- to C-terminus: Large ribosomal subunit protein bL35 (64 aa).

Residues 19-44 (TGKLKASRPGRRHKLTGKTPKRKRQL) form a disordered region. A compositionally biased stretch (basic residues) spans 23–44 (KASRPGRRHKLTGKTPKRKRQL).

Belongs to the bacterial ribosomal protein bL35 family.

The sequence is that of Large ribosomal subunit protein bL35 from Protochlamydia amoebophila (strain UWE25).